We begin with the raw amino-acid sequence, 74 residues long: Conotoxin AbVIL (74 aa).

A signal peptide spans 1–17 (VLIIAVLFLTACQLTTA). The tract at residues 17–41 (AETSSRGEQKHRAPRSTDKNSRMTK) is disordered. A propeptide spanning residues 18–40 (ETSSRGEQKHRAPRSTDKNSRMT) is cleaved from the precursor. The span at 21–37 (SRGEQKHRAPRSTDKNS) shows a compositional bias: basic and acidic residues. 3 disulfides stabilise this stretch: cysteine 43–cysteine 57, cysteine 50–cysteine 61, and cysteine 56–cysteine 68.

The protein belongs to the conotoxin O1 superfamily. Expressed by the venom duct.

It localises to the secreted. The protein is Conotoxin AbVIL of Conus abbreviatus (Abbreviated cone).